A 603-amino-acid polypeptide reads, in one-letter code: MESDVIADLRCKLKETEEERRKAAQYGLQLVESQNELQNQLDKCRNEMMTLTESYEQEKYTLQREVELKSRMLESLSSECETIKQQQKMHLEQLEETLSRSHGQEVNELKKKLETLKAELDEARLSEKQLKHKVDHQEKLLSSKSKEMQMSERVHESVSSETLTLQIELTEMENVKTTLQEEVNELQYRQEQLELLNANLMRQVDRLKGEKEEREKEAVSYYDALEKARVVNQDLQVQLDQALQQALDPNSKGNSLFAEVEDRRAAMERQLISMKVKYQSLKKQNAFNREQMQRMKVQIATLLQMKGSQAEFEQQERLLAMLEQKNGEIKHLLGEIRNLEKFKSLYESMESKPSANSVALEDDTYYTDLLQIKLDNLNKESESIKGELSIQRMKALLESQRALDIERKLFLNERHLQLSQSENMKLRAKLDELKLKYEPEEKIEVPVLKKRREVLPVDISTPNGVCAPSAVGEEDYRLSPQKEEAQSCSDGSEDNNLQLEKTVSVSTSGVILSPYKSLTLDIQPRKEKKCVKLTGVPADLEALSERSRNTPNSPRLAAESRLQREVKQGKETASKLEKAACKKSYPTVYVSSKSTPETQCPQQ.

Position 1 is an N-acetylmethionine (Met-1). A coiled-coil region spans residues 1–442 (MESDVIADLR…LKLKYEPEEK (442 aa)). Ser-513 and Ser-553 each carry phosphoserine. Residues 542-577 (ALSERSRNTPNSPRLAAESRLQREVKQGKETASKLE) are disordered. Basic and acidic residues predominate over residues 561–577 (RLQREVKQGKETASKLE).

The protein belongs to the Spindly family. As to quaternary structure, interacts with KNTC1 and ZW10. These interactions appear weak and may be transient or indirect. Interacts with dynein intermediate chain and dynactin (DCTN1). Interacts with the catalytically active form of USP45. Monoubiquitinated with'Lys-48' linkage. Deubiquitinated by USP45.

The protein localises to the cytoplasm. Its subcellular location is the cytoskeleton. The protein resides in the microtubule organizing center. It is found in the centrosome. It localises to the chromosome. The protein localises to the centromere. Its subcellular location is the kinetochore. The protein resides in the nucleus. It is found in the spindle pole. Its function is as follows. Required for the localization of dynein and dynactin to the mitotic kintochore. Dynein is believed to control the initial lateral interaction between the kinetochore and spindle microtubules and to facilitate the subsequent formation of end-on kinetochore-microtubule attachments mediated by the NDC80 complex. Also required for correct spindle orientation. Does not appear to be required for the removal of spindle assembly checkpoint (SAC) proteins from the kinetochore upon bipolar spindle attachment. Acts as an adapter protein linking the dynein motor complex to various cargos and converts dynein from a non-processive to a highly processive motor in the presence of dynactin. Facilitates the interaction between dynein and dynactin and activates dynein processivity (the ability to move along a microtubule for a long distance without falling off the track). Plays a role in cell migration. The sequence is that of Protein Spindly from Bos taurus (Bovine).